The chain runs to 530 residues: Bifunctional purine biosynthesis protein PurH (530 aa).

Positions 1 to 148 (MNNARPIHRA…KNHKDVAIVV (148 aa)) constitute an MGS-like domain.

It belongs to the PurH family.

The enzyme catalyses (6R)-10-formyltetrahydrofolate + 5-amino-1-(5-phospho-beta-D-ribosyl)imidazole-4-carboxamide = 5-formamido-1-(5-phospho-D-ribosyl)imidazole-4-carboxamide + (6S)-5,6,7,8-tetrahydrofolate. The catalysed reaction is IMP + H2O = 5-formamido-1-(5-phospho-D-ribosyl)imidazole-4-carboxamide. The protein operates within purine metabolism; IMP biosynthesis via de novo pathway; 5-formamido-1-(5-phospho-D-ribosyl)imidazole-4-carboxamide from 5-amino-1-(5-phospho-D-ribosyl)imidazole-4-carboxamide (10-formyl THF route): step 1/1. Its pathway is purine metabolism; IMP biosynthesis via de novo pathway; IMP from 5-formamido-1-(5-phospho-D-ribosyl)imidazole-4-carboxamide: step 1/1. The chain is Bifunctional purine biosynthesis protein PurH from Vibrio cholerae serotype O1 (strain ATCC 39541 / Classical Ogawa 395 / O395).